Here is a 92-residue protein sequence, read N- to C-terminus: Conotoxin Cal22f (92 aa).

The first 24 residues, 1–24 (MMSTKGITLFLCLLLLALATSVNG), serve as a signal peptide directing secretion. Residues 25-44 (GQGTRRSRMTRALHGGRPSA) constitute a propeptide that is removed on maturation.

In terms of processing, contains 4 disulfide bonds. As to expression, expressed by the venom duct.

The protein resides in the secreted. Its function is as follows. Probable neurotoxin with unknown target. Possibly targets ion channels. The polypeptide is Conotoxin Cal22f (Californiconus californicus (California cone)).